Reading from the N-terminus, the 129-residue chain is HTH-type transcriptional regulator GlnR (129 aa).

In terms of domain architecture, HTH merR-type spans 10 to 78; sequence LFPIGIVMDL…MAGIKQVLLM (69 aa). The H-T-H motif DNA-binding region spans 13–32; that stretch reads IGIVMDLTQLSARQIRYYEE.

As to quaternary structure, homodimer under conditions of nitrogen excess. Monomer under conditions of nitrogen-limited. Interacts with feedback-inhibited GlnA in order to stabilizes GlnR-DNA complex.

Its activity is regulated as follows. Under conditions of nitrogen excess, the DNA binding activity of GlnR is activated by a transient interaction with feedback-inhibited GlnA. Under conditions of nitrogen-limited, GlnR is autoinhibited by its C-terminal region. Its function is as follows. Transcription repressor during nitrogen excess. On the contrary of the MerR members, which require longer DNA sites for high-affinity binding, GlnR requires a DNA sequence of 17 nucleotides as minimal binding site. This Bacillus anthracis protein is HTH-type transcriptional regulator GlnR.